We begin with the raw amino-acid sequence, 355 residues long: uncharacterized protein (355 aa).

The protein belongs to the carbohydrate kinase PfkB family.

This is an uncharacterized protein from Dictyostelium discoideum (Social amoeba).